A 368-amino-acid chain; its full sequence is Chaperone protein DnaJ (368 aa).

Residues 5–69 (DYYEVLGLDK…QKRAQYDRFG (65 aa)) form the J domain. A CR-type zinc finger spans residues 126-208 (GKTETIELEI…CHGSGHVKKK (83 aa)). Zn(2+)-binding residues include cysteine 139, cysteine 142, cysteine 156, cysteine 159, cysteine 182, cysteine 185, cysteine 196, and cysteine 199. CXXCXGXG motif repeat units lie at residues 139–146 (CDTCMGSG), 156–163 (CNRCGGSG), 182–189 (CSQCHGSG), and 196–203 (CPTCHGSG).

Belongs to the DnaJ family. As to quaternary structure, homodimer. Zn(2+) is required as a cofactor.

The protein localises to the cytoplasm. Functionally, participates actively in the response to hyperosmotic and heat shock by preventing the aggregation of stress-denatured proteins and by disaggregating proteins, also in an autonomous, DnaK-independent fashion. Unfolded proteins bind initially to DnaJ; upon interaction with the DnaJ-bound protein, DnaK hydrolyzes its bound ATP, resulting in the formation of a stable complex. GrpE releases ADP from DnaK; ATP binding to DnaK triggers the release of the substrate protein, thus completing the reaction cycle. Several rounds of ATP-dependent interactions between DnaJ, DnaK and GrpE are required for fully efficient folding. Also involved, together with DnaK and GrpE, in the DNA replication of plasmids through activation of initiation proteins. This is Chaperone protein DnaJ from Exiguobacterium sp. (strain ATCC BAA-1283 / AT1b).